The primary structure comprises 502 residues: tRNA-2-methylthio-N(6)-dimethylallyladenosine synthase (502 aa).

The MTTase N-terminal domain occupies 12-129; that stretch reads RTYQVRTYGC…LPVLLERARH (118 aa). [4Fe-4S] cluster is bound by residues cysteine 21, cysteine 58, cysteine 92, cysteine 166, cysteine 170, and cysteine 173. A Radical SAM core domain is found at 152-383; the sequence is RESTYAGWVS…ACVEEITWAE (232 aa). The 71-residue stretch at 385–455 folds into the TRAM domain; sequence RRLVGETVEV…PHHLNADGEP (71 aa). The interval 451 to 502 is disordered; sequence ADGEPLAHRRTPAGDAAEAGRRPRTAGVSLGLPTVGAPPSPVPPAASSACAC.

Belongs to the methylthiotransferase family. MiaB subfamily. As to quaternary structure, monomer. [4Fe-4S] cluster is required as a cofactor.

Its subcellular location is the cytoplasm. It carries out the reaction N(6)-dimethylallyladenosine(37) in tRNA + (sulfur carrier)-SH + AH2 + 2 S-adenosyl-L-methionine = 2-methylsulfanyl-N(6)-dimethylallyladenosine(37) in tRNA + (sulfur carrier)-H + 5'-deoxyadenosine + L-methionine + A + S-adenosyl-L-homocysteine + 2 H(+). In terms of biological role, catalyzes the methylthiolation of N6-(dimethylallyl)adenosine (i(6)A), leading to the formation of 2-methylthio-N6-(dimethylallyl)adenosine (ms(2)i(6)A) at position 37 in tRNAs that read codons beginning with uridine. The sequence is that of tRNA-2-methylthio-N(6)-dimethylallyladenosine synthase from Salinispora arenicola (strain CNS-205).